A 477-amino-acid polypeptide reads, in one-letter code: Ribulose bisphosphate carboxylase large chain (477 aa).

A propeptide spanning residues 1-2 is cleaved from the precursor; it reads MS. Residue proline 3 is modified to N-acetylproline. N6,N6,N6-trimethyllysine is present on lysine 14. Residues asparagine 123 and threonine 173 each coordinate substrate. The Proton acceptor role is filled by lysine 175. Lysine 177 contacts substrate. Positions 201, 203, and 204 each coordinate Mg(2+). Lysine 201 is modified (N6-carboxylysine). The active-site Proton acceptor is the histidine 294. Substrate is bound by residues arginine 295, histidine 327, and serine 379.

This sequence belongs to the RuBisCO large chain family. Type I subfamily. In terms of assembly, heterohexadecamer of 8 large chains and 8 small chains; disulfide-linked. The disulfide link is formed within the large subunit homodimers. Requires Mg(2+) as cofactor. Post-translationally, the disulfide bond which can form in the large chain dimeric partners within the hexadecamer appears to be associated with oxidative stress and protein turnover.

It is found in the plastid. Its subcellular location is the chloroplast. The enzyme catalyses 2 (2R)-3-phosphoglycerate + 2 H(+) = D-ribulose 1,5-bisphosphate + CO2 + H2O. The catalysed reaction is D-ribulose 1,5-bisphosphate + O2 = 2-phosphoglycolate + (2R)-3-phosphoglycerate + 2 H(+). Functionally, ruBisCO catalyzes two reactions: the carboxylation of D-ribulose 1,5-bisphosphate, the primary event in carbon dioxide fixation, as well as the oxidative fragmentation of the pentose substrate in the photorespiration process. Both reactions occur simultaneously and in competition at the same active site. The chain is Ribulose bisphosphate carboxylase large chain from Digitalis purpurea (Common foxglove).